A 173-amino-acid chain; its full sequence is Crossover junction endodeoxyribonuclease RuvC (173 aa).

Active-site residues include aspartate 8, glutamate 67, and aspartate 139. Mg(2+) is bound by residues aspartate 8, glutamate 67, and aspartate 139.

Belongs to the RuvC family. Homodimer which binds Holliday junction (HJ) DNA. The HJ becomes 2-fold symmetrical on binding to RuvC with unstacked arms; it has a different conformation from HJ DNA in complex with RuvA. In the full resolvosome a probable DNA-RuvA(4)-RuvB(12)-RuvC(2) complex forms which resolves the HJ. Mg(2+) serves as cofactor.

It localises to the cytoplasm. It carries out the reaction Endonucleolytic cleavage at a junction such as a reciprocal single-stranded crossover between two homologous DNA duplexes (Holliday junction).. In terms of biological role, the RuvA-RuvB-RuvC complex processes Holliday junction (HJ) DNA during genetic recombination and DNA repair. Endonuclease that resolves HJ intermediates. Cleaves cruciform DNA by making single-stranded nicks across the HJ at symmetrical positions within the homologous arms, yielding a 5'-phosphate and a 3'-hydroxyl group; requires a central core of homology in the junction. The consensus cleavage sequence is 5'-(A/T)TT(C/G)-3'. Cleavage occurs on the 3'-side of the TT dinucleotide at the point of strand exchange. HJ branch migration catalyzed by RuvA-RuvB allows RuvC to scan DNA until it finds its consensus sequence, where it cleaves and resolves the cruciform DNA. This Vibrio vulnificus (strain CMCP6) protein is Crossover junction endodeoxyribonuclease RuvC.